We begin with the raw amino-acid sequence, 494 residues long: Ribose import ATP-binding protein RbsA (494 aa).

2 ABC transporter domains span residues 2–239 (IDMR…VGRQ) and 251–493 (IGEE…TGGN). ATP is bound at residue 34-41 (GENGAGKS).

The protein belongs to the ABC transporter superfamily. Ribose importer (TC 3.A.1.2.1) family. In terms of assembly, the complex is composed of an ATP-binding protein (RbsA), two transmembrane proteins (RbsC) and a solute-binding protein (RbsB).

The protein resides in the cell membrane. The enzyme catalyses D-ribose(out) + ATP + H2O = D-ribose(in) + ADP + phosphate + H(+). Part of the ABC transporter complex RbsABC involved in ribose import. Responsible for energy coupling to the transport system. In Geobacillus kaustophilus (strain HTA426), this protein is Ribose import ATP-binding protein RbsA.